Here is a 394-residue protein sequence, read N- to C-terminus: Succinate--CoA ligase [ADP-forming] subunit beta (394 aa).

ATP-binding positions include lysine 46, 53–55 (GRG), glutamate 99, cysteine 102, and glutamate 107. Mg(2+)-binding residues include asparagine 199 and aspartate 213. Substrate contacts are provided by residues asparagine 264 and 321–323 (GIV).

The protein belongs to the succinate/malate CoA ligase beta subunit family. In terms of assembly, heterotetramer of two alpha and two beta subunits. The cofactor is Mg(2+).

It catalyses the reaction succinate + ATP + CoA = succinyl-CoA + ADP + phosphate. It carries out the reaction GTP + succinate + CoA = succinyl-CoA + GDP + phosphate. Its pathway is carbohydrate metabolism; tricarboxylic acid cycle; succinate from succinyl-CoA (ligase route): step 1/1. Its function is as follows. Succinyl-CoA synthetase functions in the citric acid cycle (TCA), coupling the hydrolysis of succinyl-CoA to the synthesis of either ATP or GTP and thus represents the only step of substrate-level phosphorylation in the TCA. The beta subunit provides nucleotide specificity of the enzyme and binds the substrate succinate, while the binding sites for coenzyme A and phosphate are found in the alpha subunit. The sequence is that of Succinate--CoA ligase [ADP-forming] subunit beta from Haemophilus influenzae (strain PittGG).